The chain runs to 137 residues: MLFSLINQNQDLLENLFEDFKTNSLTNNNNIMKTDIQEQDNQYFITIELPGFKKEDVKVALEEGYLVVEAKNSKKNQIKEANFIRKERFQGFLRRSFYLGDDFLLEDIKGSLEQGLLKLSVPKKEVKPKEKHYIKLN.

One can recognise a sHSP domain in the interval 25 to 137 (LTNNNNIMKT…PKEKHYIKLN (113 aa)).

Belongs to the small heat shock protein (HSP20) family.

In terms of biological role, probable chaperone. The polypeptide is Probable Hsp20 family chaperone (Onion yellows phytoplasma (strain OY-M)).